The primary structure comprises 397 residues: Growth-regulating factor 1 (397 aa).

The QLQ domain occupies 18–53 (PFTASQWQELEHQALIYKYMASGTPIPSDLILPLRR). 2 short sequence motifs (bipartite nuclear localization signal) span residues 86–105 (RKAEDPEPGRCRRTDGKKWR) and 123–130 (RGKNRSRK). The WRC domain occupies 90-134 (DPEPGRCRRTDGKKWRCSKEAYPDSKYCEKHMHRGKNRSRKPVEM). The interval 117-176 (CEKHMHRGKNRSRKPVEMSLATPPPPSSSATSAASNTSAGVAPTTTTTSSPAPSYSRPAP) is disordered. Residues 120-129 (HMHRGKNRSR) show a composition bias toward basic residues. Low complexity predominate over residues 144-174 (SSATSAASNTSAGVAPTTTTTSSPAPSYSRP).

This sequence belongs to the GRF family.

Its subcellular location is the nucleus. Functionally, transcription activator that plays a regulatory role in gibberellin-induced stem elongation. This is Growth-regulating factor 1 (GRF1) from Oryza sativa subsp. japonica (Rice).